The sequence spans 509 residues: 2-isopropylmalate synthase (509 aa).

The 263-residue stretch at 5–267 (IQIFDTTLRD…QTALNLEETK (263 aa)) folds into the Pyruvate carboxyltransferase domain. 4 residues coordinate Mn(2+): aspartate 14, histidine 202, histidine 204, and asparagine 238. A regulatory domain region spans residues 391–509 (KLETLQLQYV…AAENVEKVGN (119 aa)).

It belongs to the alpha-IPM synthase/homocitrate synthase family. LeuA type 1 subfamily. Homodimer. Requires Mn(2+) as cofactor.

The protein localises to the cytoplasm. The enzyme catalyses 3-methyl-2-oxobutanoate + acetyl-CoA + H2O = (2S)-2-isopropylmalate + CoA + H(+). It functions in the pathway amino-acid biosynthesis; L-leucine biosynthesis; L-leucine from 3-methyl-2-oxobutanoate: step 1/4. In terms of biological role, catalyzes the condensation of the acetyl group of acetyl-CoA with 3-methyl-2-oxobutanoate (2-ketoisovalerate) to form 3-carboxy-3-hydroxy-4-methylpentanoate (2-isopropylmalate). The polypeptide is 2-isopropylmalate synthase (Staphylococcus aureus (strain MW2)).